The chain runs to 765 residues: FHF complex subunit HOOK interacting protein 2A (765 aa).

Polar residues-rich tracts occupy residues 200–209 and 538–550; these read LSTDTGQSCQ and NTLS…SSSP. 2 disordered regions span residues 200–234 and 538–562; these read LSTD…QMGD and NTLS…TDGK.

Belongs to the FHIP family.

Its function is as follows. May be required for proper functioning of the nervous system. The polypeptide is FHF complex subunit HOOK interacting protein 2A (FHIP2A) (Bos taurus (Bovine)).